The primary structure comprises 810 residues: Soluble starch synthase 2-3, chloroplastic/amyloplastic (810 aa).

The N-terminal 16 residues, 1–16, are a transit peptide targeting the chloroplast; sequence MSSAVVASSTTFLVAL. Disordered stretches follow at residues 43–265 and 281–313; these read GRAG…PIPA and EPDAAEDGDDDDDWADSDASDSEIDQDDDSGPL. A compositionally biased stretch (basic and acidic residues) spans 63–83; sequence RDAGVVRRADDGENEAAVERA. Residues 84 to 93 are compositionally biased toward acidic residues; sequence GEDDEEEEEF. A compositionally biased stretch (basic residues) spans 102–116; the sequence is RSRRGGVGKVLKRRG. Residues 129 to 148 are compositionally biased toward low complexity; it reads DAARVRGAAAPAPAPTQDAA. Acidic residues predominate over residues 281–310; sequence EPDAAEDGDDDDDWADSDASDSEIDQDDDS. K333 serves as a coordination point for ADP-alpha-D-glucose.

This sequence belongs to the glycosyltransferase 1 family. Bacterial/plant glycogen synthase subfamily. In terms of tissue distribution, expressed most exclusively in endosperm.

It localises to the plastid. Its subcellular location is the amyloplast. The protein localises to the chloroplast. It catalyses the reaction [(1-&gt;4)-alpha-D-glucosyl](n) + ADP-alpha-D-glucose = [(1-&gt;4)-alpha-D-glucosyl](n+1) + ADP + H(+). It functions in the pathway glycan biosynthesis; starch biosynthesis. In terms of biological role, plays an important role during endosperm starch synthesis. Determines the type of amylopectin structure of starch grain. Synthesizes long B1 amylopectin chains by elongating short A and B1 chains, independently of the other soluble starch synthases. Barely active in japonica subspecies. The protein is Soluble starch synthase 2-3, chloroplastic/amyloplastic (SSII-3) of Oryza sativa subsp. indica (Rice).